Reading from the N-terminus, the 289-residue chain is Poly-beta-1,6-N-acetyl-D-glucosamine N-deacetylase (289 aa).

An N-terminal signal peptide occupies residues 1–30 (MKPFKLIFISALMILIMTNATPISHLNAQA). Positions 113 to 289 (RSVWINFDDM…KEWDGFDEEK (177 aa)) constitute a NodB homology domain.

The protein belongs to the polysaccharide deacetylase family.

Its subcellular location is the secreted. It is found in the cell wall. Its function is as follows. Catalyzes the N-deacetylation of poly-beta-1,6-N-acetyl-D-glucosamine (PNAG, also referred to as PIA), a biofilm adhesin polysaccharide. In fact, the IcaB deacetylase converts 15 to 20% of the GlcNAc residues of PNAG to glucosamine. N-deacetylation is crucial for attachment of the polysaccharide to the bacterial cell surface; it leads to the introduction of positive charges in the otherwise neutral PIA polymer, allowing electrostatic interactions. Deacetylation of the polymer is also essential for key virulence mechanisms of S.epidermidis, namely biofilm formation, colonization, and resistance to neutrophil phagocytosis and human antibacterial peptides. The polypeptide is Poly-beta-1,6-N-acetyl-D-glucosamine N-deacetylase (icaB) (Staphylococcus epidermidis (strain ATCC 35984 / DSM 28319 / BCRC 17069 / CCUG 31568 / BM 3577 / RP62A)).